The chain runs to 441 residues: S-adenosylmethionine synthase 1 (441 aa).

A Mg(2+)-binding site is contributed by Glu9. His15 serves as a coordination point for ATP. Glu43 contributes to the K(+) binding site. L-methionine is bound by residues Glu56 and Gln99. ATP contacts are provided by residues Asp167–Lys169, Ser235–Phe238, Asp246, Arg252–Lys253, Ala269, Lys273, and Lys277. Residue Asp246 participates in L-methionine binding. Lys277 provides a ligand contact to L-methionine.

This sequence belongs to the AdoMet synthase family. As to quaternary structure, homotetramer. Requires Mn(2+) as cofactor. Mg(2+) is required as a cofactor. It depends on Co(2+) as a cofactor. K(+) serves as cofactor.

It localises to the cytoplasm. It carries out the reaction L-methionine + ATP + H2O = S-adenosyl-L-methionine + phosphate + diphosphate. It participates in amino-acid biosynthesis; S-adenosyl-L-methionine biosynthesis; S-adenosyl-L-methionine from L-methionine: step 1/1. Its function is as follows. Catalyzes the formation of S-adenosylmethionine from methionine and ATP. The reaction comprises two steps that are both catalyzed by the same enzyme: formation of S-adenosylmethionine (AdoMet) and triphosphate, and subsequent hydrolysis of the triphosphate. This chain is S-adenosylmethionine synthase 1 (SAMS1), found in Daucus carota (Wild carrot).